An 86-amino-acid polypeptide reads, in one-letter code: YcgL domain-containing protein XC_4086 (86 aa).

A YcgL domain is found at 1–83 (MHAYVYKSQR…PKTVVLAGEC (83 aa)).

The chain is YcgL domain-containing protein XC_4086 from Xanthomonas campestris pv. campestris (strain 8004).